We begin with the raw amino-acid sequence, 307 residues long: Porphobilinogen deaminase (307 aa).

C241 is subject to S-(dipyrrolylmethanemethyl)cysteine.

This sequence belongs to the HMBS family. In terms of assembly, monomer. The cofactor is dipyrromethane.

It carries out the reaction 4 porphobilinogen + H2O = hydroxymethylbilane + 4 NH4(+). It participates in porphyrin-containing compound metabolism; protoporphyrin-IX biosynthesis; coproporphyrinogen-III from 5-aminolevulinate: step 2/4. Tetrapolymerization of the monopyrrole PBG into the hydroxymethylbilane pre-uroporphyrinogen in several discrete steps. The polypeptide is Porphobilinogen deaminase (Coxiella burnetii (strain RSA 331 / Henzerling II)).